A 204-amino-acid polypeptide reads, in one-letter code: Large ribosomal subunit protein eL15 (204 aa).

Belongs to the eukaryotic ribosomal protein eL15 family. Component of the large ribosomal subunit.

It localises to the cytoplasm. Functionally, component of the large ribosomal subunit. The ribosome is a large ribonucleoprotein complex responsible for the synthesis of proteins in the cell. The sequence is that of Large ribosomal subunit protein eL15 (rpl15) from Tachysurus fulvidraco (Yellow catfish).